The chain runs to 235 residues: Small ribosomal subunit protein eS4 (235 aa).

The S4 RNA-binding domain occupies 37–100; that stretch reads LPLGIIIRDI…NEAYRMLQDE (64 aa).

It belongs to the eukaryotic ribosomal protein eS4 family.

This is Small ribosomal subunit protein eS4 from Methanosarcina acetivorans (strain ATCC 35395 / DSM 2834 / JCM 12185 / C2A).